An 802-amino-acid chain; its full sequence is MEVCQELRKPALSLECGHCSFRGTDYENVQLHMGSIHPEFCDDMDAGGLGKLIFYQKSAKLFHCHKCFFTSKLYANVYYHITARHAASDKWSEQPKEQPSKDTESGKSPSPPERQNPAFDPAEARPTPALPMEAQKTSPSLCPESQASGPPVLEPQGAGPLISPEPQAPCLPAEASKAAPVPCPERVDPPCELPELEKPERGPSPESVKSALVSSKPPKHSSFADTGAAPSALSPESPVLATSPEPWGPSLSASPESRKPARTASPEPRKPSPAESPELWKPFPAIASEPRRPTPAVSPGSWKPGPPGSPRPWKSSPSATSGPWKSSKPVQPMSPGPWKPIPSVSPGPWKPAPSMSTASWKSSVSSGSWKTPPTSPESWKSGPPELRKTALPLSPEHWKAVPPVSPELRRPGPPLSPEIRSPAGSPELKKPSSSPDLWKVSPDQRKTSPASLDFPEPQKSSCGSPPDLWKSSFIMESQKPNVFSETRKHTASGSSESPKVASDIWKPVLSIDAEPRKSTLFPEPTKAVLPASPEPRKRALFPESRKHVFLPELPKSAVFSDAQKAPELSEEIQLEAVDNAKCDSLAQEGLLATPKKLLDEALSPSSKKLKKDSQENSDAELSSSEYIRADLDTLDTKGQESSSDQEQVDVESIDFSKENKMEMGSTEQAKNVLQFTEEKEAFISEEEIAKYMKRGKGKYYCKICCCRAMKKGAVLHHLVNKHNVHSPYKCTICGKAFLLESLLKNHVAAHGQSLLKCPRCNFESNFPRGFKKHLTHCQSRHNEEVNKKLMEALESPLEEQQI.

Met1 carries the post-translational modification N-acetylmethionine. Residues 88–105 (SDKWSEQPKEQPSKDTES) are compositionally biased toward basic and acidic residues. Positions 88 to 475 (SDKWSEQPKE…PDLWKSSFIM (388 aa)) are disordered. Residue Ser108 is modified to Phosphoserine. The segment covering 135–148 (QKTSPSLCPESQAS) has biased composition (polar residues). Residues 185 to 203 (ERVDPPCELPELEKPERGP) show a composition bias toward basic and acidic residues. Phosphoserine occurs at positions 204, 207, 234, 237, 243, 252, 254, 265, 272, 276, 298, 309, 334, 345, and 365. The mediates interaction with MAD2L2 stretch occupies residues 261–479 (ARTASPEPRK…KSSFIMESQK (219 aa)). Pro residues predominate over residues 332–351 (PMSPGPWKPIPSVSPGPWKP). Over residues 354–368 (SMSTASWKSSVSSGS) the composition is skewed to low complexity. Residues 369-378 (WKTPPTSPES) show a composition bias toward polar residues. Thr371 carries the phosphothreonine modification. 9 positions are modified to phosphoserine: Ser375, Ser394, Ser405, Ser416, Ser421, Ser425, Ser432, Ser434, and Ser441. Residues 440-580 (VSPDQRKTSP…EIQLEAVDNA (141 aa)) form a mediates localization to the spindle and the kinetochore and is required for the attachment of spindle microtubules to the kinetochore region. Residue Thr447 is modified to Phosphothreonine. Residues Ser448, Ser451, and Ser461 each carry the phosphoserine modification. Lys479 carries the N6-acetyllysine; alternate modification. Lys479 participates in a covalent cross-link: Glycyl lysine isopeptide (Lys-Gly) (interchain with G-Cter in SUMO2); alternate. Ser497, Ser502, and Ser532 each carry phosphoserine. A Glycyl lysine isopeptide (Lys-Gly) (interchain with G-Cter in SUMO2) cross-link involves residue Lys555. The interval 581 to 802 (KCDSLAQEGL…LESPLEEQQI (222 aa)) is mediates localization to the chromosome and the spindle and negatively regulates chromosome alignment. Thr593 is subject to Phosphothreonine. A Glycyl lysine isopeptide (Lys-Gly) (interchain with G-Cter in SUMO2) cross-link involves residue Lys596. Phosphoserine is present on residues Ser603, Ser605, Ser617, Ser622, Ser641, Ser642, and Ser643. A disordered region spans residues 603–625 (SPSSKKLKKDSQENSDAELSSSE). A Glycyl lysine isopeptide (Lys-Gly) (interchain with G-Cter in SUMO2) cross-link involves residue Lys660. At Ser665 the chain carries Phosphoserine. Residue Lys679 forms a Glycyl lysine isopeptide (Lys-Gly) (interchain with G-Cter in SUMO2) linkage. The residue at position 726 (Ser726) is a Phosphoserine. Residues 728 to 750 (YKCTICGKAFLLESLLKNHVAAH) form a C2H2-type zinc finger.

In terms of assembly, interacts with MAD2L2. Interacts with POGZ, CBX1, CBX3 and CBX5. Phosphorylated by CDK1. Mitotic phosphorylation is required for the attachment of spindle microtubules to the kinetochore.

It localises to the nucleus. It is found in the chromosome. The protein localises to the centromere. The protein resides in the kinetochore. Its subcellular location is the cytoplasm. It localises to the cytoskeleton. It is found in the spindle. In terms of biological role, required for proper alignment of chromosomes at metaphase and their accurate segregation during mitosis. Involved in the maintenance of spindle microtubules attachment to the kinetochore during sister chromatid biorientation. May recruit CENPE and CENPF to the kinetochore. In Mus musculus (Mouse), this protein is Chromosome alignment-maintaining phosphoprotein 1 (Champ1).